A 1239-amino-acid polypeptide reads, in one-letter code: DNA polymerase subunit gamma-1 (1239 aa).

The disordered stretch occupies residues 1–68 (MSRLLWRKVA…PQVLSSEGGQ (68 aa)). Low complexity-rich tracts occupy residues 9-36 (VAGA…SDPS) and 44-60 (QQQQ…QQPQ). A does not contribute to polymerase and exonuclease enzymatic activities region spans residues 43–55 (QQQQQQQQQQQQQ). An Exo I motif is present at residues 196-200 (VFDVE). The active-site Exonuclease activity is the Asp-198. The Exo II motif lies at 267–275 (VGHNVSFDR). Ser-306 contacts DNA. Residues 318–340 (GKHKVQPPTKQGQKSQRKARRGP) form a disordered region. The short motif at 395–403 (YCAQDVWAT) is the Exo III element. A disordered region spans residues 506–531 (EPATASKLPIEGAGAPGDPMDQEDLG). The tract at residues 510-571 (ASKLPIEGAG…RPQHLPGHPG (62 aa)) is accessory-interacting determinant. Arg-579 serves as a coordination point for RNA. Residue Ser-593 coordinates DNA. 3 residues coordinate RNA: His-754, Gly-763, and Lys-768. Lys-806 and Thr-849 together coordinate DNA. Residues 858–864 (TWLTASN) form a trigger loop region. RNA-binding residues include Ser-863 and Arg-869. Residues 887–896 (VGADVDSQEL) carry the Pol A motif. Positions 890, 891, 893, 895, 943, 947, and 951 each coordinate a 2'-deoxyribonucleoside 5'-triphosphate. Mg(2+) contacts are provided by Asp-890 and Val-891. Positions 943-958 (REHAKIFNYGRIYGAG) match the Pol B motif. DNA contacts are provided by Thr-1094 and Ser-1095. Positions 1134–1141 (HDEVRYLV) match the Pol C motif. Residue Asp-1135 participates in a 2'-deoxyribonucleoside 5'-triphosphate binding. Asp-1135 lines the Mg(2+) pocket.

The protein belongs to the DNA polymerase type-A family. Heterotrimer composed of a catalytic subunit and a homodimer of accessory subunits (POLG:POLG2). Interacts with TTC3. Interacts with LIG3. The cofactor is Mg(2+).

It localises to the mitochondrion. Its subcellular location is the mitochondrion matrix. It is found in the mitochondrion nucleoid. It catalyses the reaction DNA(n) + a 2'-deoxyribonucleoside 5'-triphosphate = DNA(n+1) + diphosphate. The enzyme catalyses a 3'-end 2'-deoxyribonucleotidyl-deoxyribonucleotide-DNA + H2O = a 3'-end 2'-deoxyribonucleotide-DNA + a 2'-deoxyribonucleoside 5'-phosphate + H(+). The catalysed reaction is a 5'-end 2'-deoxyribose-2'-deoxyribonucleotide-DNA = (2E,4S)-4-hydroxypenten-2-al-5-phosphate + a 5'-end 5'-phospho-2'-deoxyribonucleoside-DNA + H(+). Its activity is regulated as follows. Inhibited by dideoxynucleotides such as antiviral agent zalcitabine. Its function is as follows. Catalytic subunit of DNA polymerase gamma solely responsible for replication of mitochondrial DNA (mtDNA). Replicates both heavy and light strands of the circular mtDNA genome using a single-stranded DNA template, RNA primers and the four deoxyribonucleoside triphosphates as substrates. Has 5' -&gt; 3' polymerase activity. Functionally interacts with TWNK and SSBP1 at the replication fork to form a highly processive replisome, where TWNK unwinds the double-stranded DNA template prior to replication and SSBP1 covers the parental heavy strand to enable continuous replication of the entire mitochondrial genome. A single nucleotide incorporation cycle includes binding of the incoming nucleotide at the insertion site, a phosphodiester bond formation reaction that extends the 3'-end of the primer DNA, and translocation of the primer terminus to the post-insertion site. After completing replication of a mtDNA strand, mediates 3' -&gt; 5' exonucleolytic degradation at the nick to enable proper ligation. Highly accurate due to high nucleotide selectivity and 3' -&gt; 5' exonucleolytic proofreading. Proficiently corrects base substitutions, single-base additions and deletions in non-repetitive sequences and short repeats, but displays lower proofreading activity when replicating longer homopolymeric stretches. Exerts exonuclease activity toward single-stranded DNA and double-stranded DNA containing 3'-terminal mispairs. When a misincorporation occurs, transitions from replication to a pro-nucleolytic editing mode and removes the missincorporated nucleoside in the exonuclease active site. Proceeds via an SN2 nucleolytic mechanism in which Asp-198 catalyzes phosphodiester bond hydrolysis and Glu-200 stabilizes the leaving group. As a result the primer strand becomes one nucleotide shorter and is positioned in the post-insertion site, ready to resume DNA synthesis. Exerts 5'-deoxyribose phosphate (dRP) lyase activity and mediates repair-associated mtDNA synthesis (gap filling) in base-excision repair pathway. Catalyzes the release of the 5'-terminal 2-deoxyribose-5-phosphate sugar moiety from incised apurinic/apyrimidinic (AP) sites to produce a substrate for DNA ligase. The dRP lyase reaction does not require divalent metal ions and likely proceeds via a Schiff base intermediate in a beta-elimination reaction mechanism. The polypeptide is DNA polymerase subunit gamma-1 (Homo sapiens (Human)).